An 802-amino-acid chain; its full sequence is Leucine--tRNA ligase (802 aa).

The 'HIGH' region motif lies at 40 to 51; the sequence is PYPSGAGLHVGH. Positions 576-580 match the 'KMSKS' region motif; sequence KMSKS. Lysine 579 provides a ligand contact to ATP.

This sequence belongs to the class-I aminoacyl-tRNA synthetase family.

Its subcellular location is the cytoplasm. It carries out the reaction tRNA(Leu) + L-leucine + ATP = L-leucyl-tRNA(Leu) + AMP + diphosphate. The chain is Leucine--tRNA ligase from Bacillus cereus (strain ATCC 14579 / DSM 31 / CCUG 7414 / JCM 2152 / NBRC 15305 / NCIMB 9373 / NCTC 2599 / NRRL B-3711).